Reading from the N-terminus, the 310-residue chain is Aspartate carbamoyltransferase catalytic subunit 1 (310 aa).

Residues Arg-55 and Thr-56 each contribute to the carbamoyl phosphate site. Lys-85 contacts L-aspartate. Residues Arg-106, His-134, and Gln-137 each contribute to the carbamoyl phosphate site. L-aspartate-binding residues include Arg-167 and Arg-228. Carbamoyl phosphate is bound by residues Leu-266 and Pro-267.

The protein belongs to the aspartate/ornithine carbamoyltransferase superfamily. ATCase family. As to quaternary structure, heterododecamer (2C3:3R2) of six catalytic PyrB chains organized as two trimers (C3), and six regulatory PyrI chains organized as three dimers (R2).

The enzyme catalyses carbamoyl phosphate + L-aspartate = N-carbamoyl-L-aspartate + phosphate + H(+). Its pathway is pyrimidine metabolism; UMP biosynthesis via de novo pathway; (S)-dihydroorotate from bicarbonate: step 2/3. In terms of biological role, catalyzes the condensation of carbamoyl phosphate and aspartate to form carbamoyl aspartate and inorganic phosphate, the committed step in the de novo pyrimidine nucleotide biosynthesis pathway. This is Aspartate carbamoyltransferase catalytic subunit 1 from Shewanella halifaxensis (strain HAW-EB4).